Reading from the N-terminus, the 116-residue chain is uncharacterized protein (116 aa).

2 consecutive transmembrane segments (helical) span residues 40-60 (AIVK…IGIL) and 72-92 (FLGS…VVPI).

Its subcellular location is the membrane. This is an uncharacterized protein from Saccharomyces cerevisiae (strain ATCC 204508 / S288c) (Baker's yeast).